A 213-amino-acid chain; its full sequence is Ras-related protein Rab-4A (213 aa).

Positions 18, 19, 20, 21, 22, 23, 37, 39, and 40 each coordinate GTP. Mg(2+) is bound at residue serine 22. The Switch 1 motif lies at 39–44 (HTIGVE). The Mg(2+) site is built by threonine 40 and aspartate 63. Residues 65–74 (AGQERFRSVT) carry the Switch 2 motif. Residues glycine 66, asparagine 121, lysine 122, aspartate 124, alanine 152, and leucine 153 each coordinate GTP. 2 S-geranylgeranyl cysteine lipidation sites follow: cysteine 211 and cysteine 213. Cysteine 213 is subject to Cysteine methyl ester.

This sequence belongs to the small GTPase superfamily. Rab family. Mg(2+) serves as cofactor.

The protein localises to the membrane. The protein resides in the cytoplasm. It localises to the early endosome membrane. Its subcellular location is the recycling endosome membrane. The catalysed reaction is GTP + H2O = GDP + phosphate + H(+). With respect to regulation, regulated by guanine nucleotide exchange factors (GEFs) which promote the exchange of bound GDP for free GTP. Regulated by GTPase activating proteins (GAPs) which increase the GTP hydrolysis activity. Inhibited by GDP dissociation inhibitors (GDIs). Its function is as follows. The small GTPases Rab are key regulators of intracellular membrane trafficking, from the formation of transport vesicles to their fusion with membranes. Rabs cycle between an inactive GDP-bound form and an active GTP-bound form that is able to recruit to membranes different sets of downstream effectors directly responsible for vesicle formation, movement, tethering and fusion. RAB4A is involved in protein transport. Also plays a role in vesicular traffic. Mediates VEGFR2 endosomal trafficking to enhance VEGFR2 signaling. Acts as a regulator of platelet alpha-granule release during activation and aggregation of platelets. In Danio rerio (Zebrafish), this protein is Ras-related protein Rab-4A (rab4a).